The chain runs to 265 residues: Apolipoprotein A-I (265 aa).

Residues 1–20 form the signal peptide; sequence METKAVVLTLAVLFLTGSQA. Repeat copies occupy residues 69–90 and 91–112. The 10 X approximate tandem repeats stretch occupies residues 69 to 265; the sequence is LKILDNWDTL…DEATKKLNSQ (197 aa). One copy of the 3; half-length repeat lies at 113-123; the sequence is KDLEELKQKVQ. 5 tandem repeats follow at residues 124 to 145, 146 to 167, 168 to 189, 190 to 209, and 210 to 230. Residue Met-195 is modified to Methionine sulfoxide. Residues 231 to 241 form a 9; half-length repeat; that stretch reads PALEDFRQGLM. Met-241 bears the Methionine sulfoxide mark. The stretch at 242–265 is repeat 10; the sequence is PVLEGFQKSVLAALDEATKKLNSQ.

The protein belongs to the apolipoprotein A1/A4/E family. As to quaternary structure, homodimer. Interacts with APOA1BP and CLU. Component of a sperm activating protein complex (SPAP), consisting of APOA1, an immunoglobulin heavy chain, an immunoglobulin light chain and albumin. Interacts with NDRG1. Interacts with SCGB3A2. Interacts with NAXE and YJEFN3. Post-translationally, glycosylated. Palmitoylated. In terms of processing, phosphorylation sites are present in the extracellular medium. In terms of tissue distribution, major protein of plasma HDL, also found in chylomicrons.

The protein resides in the secreted. Functionally, participates in the reverse transport of cholesterol from tissues to the liver for excretion by promoting cholesterol efflux from tissues and by acting as a cofactor for the lecithin cholesterol acyltransferase (LCAT). As part of the SPAP complex, activates spermatozoa motility. This Orycteropus afer (Aardvark) protein is Apolipoprotein A-I (APOA1).